Reading from the N-terminus, the 130-residue chain is Glycoprotein hormone beta-5 (130 aa).

The N-terminal stretch at 1–24 is a signal peptide; the sequence is MKLVYLVLGAVALLLLGGPDSVLS. Disulfide bonds link Cys-36–Cys-84, Cys-50–Cys-99, Cys-60–Cys-115, Cys-64–Cys-117, and Cys-120–Cys-127. Asn-87 carries an N-linked (GlcNAc...) asparagine glycan.

Belongs to the glycoprotein hormones subunit beta family. In terms of assembly, heterodimer with GPHA2; this heterodimer interacts with thyroid-stimulating hormone receptor (TSHR), and hence stimulates cAMP production. N-glycosylated. Expressed in the anterior lobe of pituitary.

The protein resides in the secreted. Its function is as follows. Functions as a heterodimeric glycoprotein hormone with GPHA2 able to bind and activate the thyroid-stimulating hormone receptor (TSHR), leading to increased cAMP production. Plays a central role in controlling thyroid cell metabolism. The protein is Glycoprotein hormone beta-5 (Gphb5) of Mus musculus (Mouse).